The primary structure comprises 286 residues: GTP-binding protein 8 (286 aa).

In terms of domain architecture, EngB-type G spans 105–278 (KQPEVCFMGR…RCFIAHVTGK (174 aa)). GTP-binding positions include 113-120 (GRSNVGKS), 142-146 (GHTKK), 160-163 (DMPG), 222-225 (TKID), and 257-259 (VSS). The Mg(2+) site is built by Ser120 and Thr144.

The protein belongs to the TRAFAC class TrmE-Era-EngA-EngB-Septin-like GTPase superfamily. EngB GTPase family. It depends on Mg(2+) as a cofactor.

The protein is GTP-binding protein 8 (gtpbp8) of Danio rerio (Zebrafish).